Consider the following 276-residue polypeptide: TIMELESS-interacting protein (276 aa).

The tract at residues 1–54 (MLEQEENGLFEIPDYEHVEDETFPPFPPPGSPERDPAEAEPDEGSGAPVPVPPK) is disordered. The segment at 64–140 (LDATRLTSER…KEVQTCLKRI (77 aa)) is interaction with TIMELESS. Positions 217–243 (SNSQSLENDVTVEESSTGENQEESNGL) are enriched in polar residues. The interval 217–276 (SNSQSLENDVTVEESSTGENQEESNGLISADGPHDVPSASTQEEGQLEAEETQLDHPNLD) is disordered. The residue at position 219 (Ser-219) is a Phosphoserine. Thr-233 is modified (phosphothreonine).

Belongs to the CSM3 family. In terms of assembly, interacts with TIMELESS, which impairs TIMELESS self-association (via N-terminus). Associates with the MCM2-7 complex. Interacts with RPA2, PRDX2.

It is found in the cytoplasm. It localises to the nucleus. Plays an important role in the control of DNA replication and the maintenance of replication fork stability. Important for cell survival after DNA damage or replication stress. May be specifically required for the ATR-CHEK1 pathway in the replication checkpoint induced by hydroxyurea or ultraviolet light. Forms a complex with TIMELESS and this complex regulates DNA replication processes under both normal and stress conditions, stabilizes replication forks and influences both CHEK1 phosphorylation and the intra-S phase checkpoint in response to genotoxic stress. This is TIMELESS-interacting protein (Tipin) from Rattus norvegicus (Rat).